The chain runs to 460 residues: Baeyer-Villiger oxidase AgnL3 (460 aa).

Belongs to the questin oxidase family. NADPH is required as a cofactor.

It participates in secondary metabolite biosynthesis. Its function is as follows. Baeyer-Villiger oxidase; part of the gene cluster that mediates the biosynthesis of agnestins, dihydroxy-xanthone metabolites. The pathway begins with the assembly and cyclization of atrochrysone thioester by the non-reducing polyketide synthase Agnpks1. The atrochrysone carboxyl ACP thioesterase AgnL7 then breaks the thioester bond and releases the atrochrysone carboxylic acid as the first enzyme-free intermediate. The decarboxylase AgnL1 then catalyzes the concerted decarboxylation-elimination required to convert atochrysone carboxylic acid into emodin anthrone, which is further oxidized to emodin by the anthrone oxygenase AgnL2. Emodin then undergoes reduction catalyzed by the oxidoreductase AgnL4 to yield the dihydroquinone tautomer which is the substrate for reduction by the short chain dehydrogenase AgnL6 reduction to produce hydroxyketone, followed by AgnL8 dehydration and likely spontaneous autoxidation to chrysophanol. Baeyer-Villiger oxidation by the oxidase AgnL3 leads to monodictyphenone via cleavage of the C-10/C-10a bond of chrysophanol. Alternative cleavage at the C-4a/C-10 bond of chrysophanol also leads to the formation some cephalone F. Further conversion to agnestins A and B, requires reduction to dihydro-monodictyphenone, oxidation to agnestin C probably via an epoxide, and rearrangement to either agnestin A or agnestin B directly, although agnestin A or agnestin B can also interconvert. Within the cluster, AgnR1 is the only unassigned oxidoreductase present which could be involved in this conversion. However, AgnR1 seems not to be involved in this step, and thus genes involved in the proposed oxidation/reduction may be located elsewhere on the genome. Further agnestin A derivatives are probably formed by spontaneous decarboxylations, dehydrations and methanolysis reactions. This Paecilomyces divaricatus (Penicillium divaricatum) protein is Baeyer-Villiger oxidase AgnL3.